Reading from the N-terminus, the 384-residue chain is Bifunctional enzyme IspD/IspF (384 aa).

2-C-methyl-D-erythritol 4-phosphate cytidylyltransferase stretches follow at residues 1-227 (MAKV…EGEQ) and 1-228 (MAKV…GEQR). The interval 228 to 384 (RIGSGFDVHR…QATALITLPF (157 aa)) is 2-C-methyl-D-erythritol 2,4-cyclodiphosphate synthase. Residues D234 and H236 each contribute to the a divalent metal cation site. Residues 234-236 (DVH) and 260-261 (HS) contribute to the 4-CDP-2-C-methyl-D-erythritol 2-phosphate site. H268 lines the a divalent metal cation pocket. Residues 282 to 284 (DIG), 358 to 361 (TTTE), F365, and R368 each bind 4-CDP-2-C-methyl-D-erythritol 2-phosphate.

This sequence in the N-terminal section; belongs to the IspD/TarI cytidylyltransferase family. IspD subfamily. In the C-terminal section; belongs to the IspF family. It depends on a divalent metal cation as a cofactor.

The catalysed reaction is 2-C-methyl-D-erythritol 4-phosphate + CTP + H(+) = 4-CDP-2-C-methyl-D-erythritol + diphosphate. It carries out the reaction 4-CDP-2-C-methyl-D-erythritol 2-phosphate = 2-C-methyl-D-erythritol 2,4-cyclic diphosphate + CMP. It functions in the pathway isoprenoid biosynthesis; isopentenyl diphosphate biosynthesis via DXP pathway; isopentenyl diphosphate from 1-deoxy-D-xylulose 5-phosphate: step 2/6. Its pathway is isoprenoid biosynthesis; isopentenyl diphosphate biosynthesis via DXP pathway; isopentenyl diphosphate from 1-deoxy-D-xylulose 5-phosphate: step 4/6. Its function is as follows. Bifunctional enzyme that catalyzes the formation of 4-diphosphocytidyl-2-C-methyl-D-erythritol from CTP and 2-C-methyl-D-erythritol 4-phosphate (MEP) (IspD), and catalyzes the conversion of 4-diphosphocytidyl-2-C-methyl-D-erythritol 2-phosphate (CDP-ME2P) to 2-C-methyl-D-erythritol 2,4-cyclodiphosphate (ME-CPP) with a corresponding release of cytidine 5-monophosphate (CMP) (IspF). The protein is Bifunctional enzyme IspD/IspF of Rhodospirillum rubrum (strain ATCC 11170 / ATH 1.1.1 / DSM 467 / LMG 4362 / NCIMB 8255 / S1).